The sequence spans 295 residues: Bifunctional protein FolD (295 aa).

NADP(+) contacts are provided by residues 166-168 (GRS), Ser-195, and Ile-236.

The protein belongs to the tetrahydrofolate dehydrogenase/cyclohydrolase family. Homodimer.

It carries out the reaction (6R)-5,10-methylene-5,6,7,8-tetrahydrofolate + NADP(+) = (6R)-5,10-methenyltetrahydrofolate + NADPH. The enzyme catalyses (6R)-5,10-methenyltetrahydrofolate + H2O = (6R)-10-formyltetrahydrofolate + H(+). It participates in one-carbon metabolism; tetrahydrofolate interconversion. Catalyzes the oxidation of 5,10-methylenetetrahydrofolate to 5,10-methenyltetrahydrofolate and then the hydrolysis of 5,10-methenyltetrahydrofolate to 10-formyltetrahydrofolate. This chain is Bifunctional protein FolD, found in Chlorobium phaeobacteroides (strain DSM 266 / SMG 266 / 2430).